Reading from the N-terminus, the 252-residue chain is NLP effector protein Pc118356 (252 aa).

A signal peptide spans Met-1–Gly-17. Residues Asn-20 and Asn-67 are each glycosylated (N-linked (GlcNAc...) asparagine). A Hepta-peptide GHRHDWE motif motif is present at residues Gln-121–Glu-127. A glycan (N-linked (GlcNAc...) asparagine) is linked at Asn-166.

This sequence belongs to the Necrosis inducing protein (NPP1) family.

The protein localises to the secreted. In terms of biological role, secreted effector that contributes strongly to virulence during infection by P.capsici. The sequence is that of NLP effector protein Pc118356 from Phytophthora capsici.